We begin with the raw amino-acid sequence, 754 residues long: RNA exonuclease 5 (754 aa).

Residues 1–36 (MELEEEENPRKRKETPNSALTTELDRPSWDVQDPEP) form a disordered region. Residues 222–370 (LFGLDCEVCL…EDARTALELV (149 aa)) enclose the Exonuclease domain. RRM domains follow at residues 488–562 (STIY…RLLT) and 583–662 (GTIY…RHLQ).

This Rattus norvegicus (Rat) protein is RNA exonuclease 5 (Rexo5).